Here is a 644-residue protein sequence, read N- to C-terminus: Exoribonuclease 2 (644 aa).

The RNB domain maps to 189 to 516; sequence REDLTALDFV…NHRLLKAVIK (328 aa). An S1 motif domain is found at 561 to 643; it reads DTRFAAEIVD…ETRSIIARPV (83 aa).

The protein belongs to the RNR ribonuclease family. RNase II subfamily.

The protein localises to the cytoplasm. It catalyses the reaction Exonucleolytic cleavage in the 3'- to 5'-direction to yield nucleoside 5'-phosphates.. Its function is as follows. Involved in mRNA degradation. Hydrolyzes single-stranded polyribonucleotides processively in the 3' to 5' direction. The sequence is that of Exoribonuclease 2 from Escherichia coli O139:H28 (strain E24377A / ETEC).